The primary structure comprises 262 residues: Small ribosomal subunit protein eS1 (262 aa).

It belongs to the eukaryotic ribosomal protein eS1 family. In terms of assembly, component of the small ribosomal subunit. Mature ribosomes consist of a small (40S) and a large (60S) subunit. The 40S subunit contains about 33 different proteins and 1 molecule of RNA (18S). The 60S subunit contains about 49 different proteins and 3 molecules of RNA (25S, 5.8S and 5S).

The protein localises to the cytoplasm. This is Small ribosomal subunit protein eS1 from Theileria annulata.